The chain runs to 407 residues: E3 ubiquitin-protein ligase TRIM13 (407 aa).

The RING-type zinc-finger motif lies at 10–58 (CPICCSLFDDPRVLPCSHNFCKKCLEGLLEGNVRNSLWRPSPFKCPTCR). Residues 89–131 (PKMPVCKEHLGQPLNIFCVTDMQLICGVCATRGSHTKHVFSSI) form a B box-type zinc finger. Zn(2+)-binding residues include cysteine 94, histidine 97, cysteine 117, and histidine 123. The stretch at 172 to 200 (LQLLTKDSDKVKEFFEKLQHTLDQKKNEI) forms a coiled coil. A helical membrane pass occupies residues 316-336 (LLLMAVVLLGLLVFFGPTVFL).

In terms of assembly, interacts (via C-terminal domain) with VCP. Interacts with AKT1; the interaction ubiquitinates AKT1 and leads to its proteasomal degradation. Interacts with MDM2; the interaction ubiquitinates AKT1 and leads to its proteasomal degradation. Interacts with p62/SQSTM1. Interacts with TRAF6. Interacts with IKBKG/NEMO. Post-translationally, auto-ubiquitinated; requires the RING-type zinc finger. Auto-polyubiquitination leads to proteasomal degradation.

It is found in the endoplasmic reticulum membrane. The catalysed reaction is S-ubiquitinyl-[E2 ubiquitin-conjugating enzyme]-L-cysteine + [acceptor protein]-L-lysine = [E2 ubiquitin-conjugating enzyme]-L-cysteine + N(6)-ubiquitinyl-[acceptor protein]-L-lysine.. Its pathway is protein modification; protein ubiquitination. In terms of biological role, endoplasmic reticulum (ER) membrane anchored E3 ligase involved in the retrotranslocation and turnover of membrane and secretory proteins from the ER through a set of processes named ER-associated degradation (ERAD). This process acts on misfolded proteins as well as in the regulated degradation of correctly folded proteins. Enhances ionizing radiation-induced p53/TP53 stability and apoptosis via ubiquitinating MDM2 and AKT1 and decreasing AKT1 kinase activity through MDM2 and AKT1 proteasomal degradation. Regulates ER stress-induced autophagy, and may act as a tumor suppressor. Also plays a role in innate immune response by stimulating NF-kappa-B activity in the TLR2 signaling pathway. Ubiquitinates TRAF6 via the 'Lys-29'-linked polyubiquitination chain resulting in NF-kappa-B activation. Participates as well in T-cell receptor-mediated NF-kappa-B activation. In the presence of TNF, modulates the IKK complex by regulating IKBKG/NEMO ubiquitination leading to the repression of NF-kappa-B. In Rattus norvegicus (Rat), this protein is E3 ubiquitin-protein ligase TRIM13 (Trim13).